The following is a 439-amino-acid chain: uncharacterized protein (439 aa).

This is an uncharacterized protein from Caenorhabditis elegans.